A 37-amino-acid chain; its full sequence is MKVRASVKKICDKCKIIKRKGIVRVICETPKHTQRQG.

It belongs to the bacterial ribosomal protein bL36 family.

The sequence is that of Large ribosomal subunit protein bL36 from Geobacter metallireducens (strain ATCC 53774 / DSM 7210 / GS-15).